Consider the following 313-residue polypeptide: Uracil-DNA glycosylase (313 aa).

Residues 35-68 (DEPMPKKCRRPAGPPKGFISTRGDTSPSSDNNHI) form a disordered region. Positions 56–68 (RGDTSPSSDNNHI) are enriched in polar residues. Residue Asp-153 is the Proton acceptor of the active site.

It belongs to the uracil-DNA glycosylase (UDG) superfamily. UNG family.

The protein localises to the host nucleus. The catalysed reaction is Hydrolyzes single-stranded DNA or mismatched double-stranded DNA and polynucleotides, releasing free uracil.. Excises uracil residues from the DNA which can arise as a result of misincorporation of dUMP residues by DNA polymerase or deamination of cytosines. Therefore may reduce deleterious uracil incorporation into the viral genome, particularly in terminally differentiated cells which lack DNA repair enzymes. The protein is Uracil-DNA glycosylase (MDV014) of Gallus gallus (Chicken).